We begin with the raw amino-acid sequence, 144 residues long: Large ribosomal subunit protein uL15 (144 aa).

The segment at 1-49 is disordered; that stretch reads MRLNTLSPAAGAKSAAKRVGRGIGSGTGKTCGRGHKGQKSRSGGGVRVG. Gly residues predominate over residues 21–31; it reads RGIGSGTGKTC.

Belongs to the universal ribosomal protein uL15 family. Part of the 50S ribosomal subunit.

Binds to the 23S rRNA. This is Large ribosomal subunit protein uL15 from Shewanella sediminis (strain HAW-EB3).